Here is a 359-residue protein sequence, read N- to C-terminus: MSFDSNLEELYQKFCKLKSILEDPSQLSVDSFVAASKEYSELLPVISVIDQYNSLQKDIADLEELINNPETDHELKSLAKEEFYERQKQLPKIKNKLKLSLIPKDRDDARNAILEIRAGTGGEEAALFVTDLYRMYTKYAEQKNWKFEQINSSSTGIGGHKEVSLCISGSNVFARLKFESGVHRVQRVPETEASGRLHTSAATVAVLPEIEEVDLKIDEKDLRIDVYRSSGPGGQSVNTTDSAVRITHIPSGIVVIQQDEKSQHKNKNKALKVLRARLYNLEKQKRDSEISQMRKSQIGSGDRSERIRTYNFPQSRITDHRINLTLYRLEDIMKEGNLDEFIDALIAEDEANKLKNLHI.

Gln235 is subject to N5-methylglutamine. Positions 285 to 305 (KRDSEISQMRKSQIGSGDRSE) are disordered. Residues 290–299 (ISQMRKSQIG) are compositionally biased toward polar residues.

This sequence belongs to the prokaryotic/mitochondrial release factor family. Post-translationally, methylated by PrmC. Methylation increases the termination efficiency of RF1.

Its subcellular location is the cytoplasm. In terms of biological role, peptide chain release factor 1 directs the termination of translation in response to the peptide chain termination codons UAG and UAA. The polypeptide is Peptide chain release factor 1 (Ehrlichia canis (strain Jake)).